The primary structure comprises 1032 residues: Integrin alpha-4 (1032 aa).

Positions 1 to 34 are cleaved as a signal peptide; it reads MIRDLGKVGKVSLLLDHIWTGILLYTVILTPADC. Residues 35 to 974 lie on the Extracellular side of the membrane; that stretch reads YNIDESSPML…LHNLKPKKHV (940 aa). FG-GAP repeat units lie at residues 36-100, 113-177, 186-237, 238-291, 292-351, 353-411, and 415-477; these read NIDE…PNRT, KCGK…TELS, DHVR…TIKS, YVDL…EKQL, TILF…GAME, LKFE…GITP, and QRLQ…LPST. Asn-81 and Asn-98 each carry an N-linked (GlcNAc...) asparagine glycan. 3 disulfide bridges follow: Cys-91/Cys-101, Cys-144/Cys-165, and Cys-183/Cys-198. N-linked (GlcNAc...) asparagine glycosylation is present at Asn-229. Residues Asp-314, Asn-316, Asp-318, Leu-320, Asp-322, Asp-376, Asp-378, Asp-380, Asp-384, Asp-438, Asp-440, Asn-442, Tyr-444, and Asp-446 each coordinate Ca(2+). Asn-479 carries N-linked (GlcNAc...) asparagine glycosylation. Cysteines 485 and 494 form a disulfide. N-linked (GlcNAc...) asparagine glycosylation is found at Asn-496, Asn-517, Asn-537, Asn-626, and Asn-660. Intrachain disulfides connect Cys-500-Cys-556 and Cys-622-Cys-627. Cys-698 and Cys-712 are oxidised to a cystine. Asn-746 and Asn-857 each carry an N-linked (GlcNAc...) asparagine glycan. Intrachain disulfides connect Cys-853/Cys-889 and Cys-896/Cys-901. The chain crosses the membrane as a helical span at residues 975–998; that stretch reads IYMIIGISLLLGILLFSLLTYILW. At 999–1032 the chain is on the cytoplasmic side; sequence KVGFFRRKYQPIGTEETSRRESWNYLNKDEKEVK. Positions 1001 to 1005 match the GFFKR motif motif; sequence GFFRR.

The protein belongs to the integrin alpha chain family. In terms of assembly, heterodimer of an alpha and a beta subunit.

The protein localises to the membrane. In terms of biological role, fibronectin and V-CAM adhesion receptor. This is Integrin alpha-4 (itga4) from Xenopus laevis (African clawed frog).